We begin with the raw amino-acid sequence, 587 residues long: Aspartate--tRNA ligase (587 aa).

Glu-174 contacts L-aspartate. Residues 198 to 201 (QITK) form an aspartate region. Position 220 (Arg-220) interacts with L-aspartate. Residues 220–222 (RDE) and Gln-229 contribute to the ATP site. His-443 is a binding site for L-aspartate. Glu-477 contacts ATP. Arg-484 is a binding site for L-aspartate. 529–532 (GLDR) lines the ATP pocket.

It belongs to the class-II aminoacyl-tRNA synthetase family. Type 1 subfamily. In terms of assembly, homodimer.

It localises to the cytoplasm. It carries out the reaction tRNA(Asp) + L-aspartate + ATP = L-aspartyl-tRNA(Asp) + AMP + diphosphate. Catalyzes the attachment of L-aspartate to tRNA(Asp) in a two-step reaction: L-aspartate is first activated by ATP to form Asp-AMP and then transferred to the acceptor end of tRNA(Asp). The chain is Aspartate--tRNA ligase from Streptococcus pneumoniae (strain 70585).